We begin with the raw amino-acid sequence, 200 residues long: uncharacterized protein (200 aa).

Residues 1–21 form a disordered region; that stretch reads MSNSAQRDARNSRDESARASD. Positions 7–21 are enriched in basic and acidic residues; sequence RDARNSRDESARASD.

This is an uncharacterized protein from Mycobacterium tuberculosis (strain CDC 1551 / Oshkosh).